We begin with the raw amino-acid sequence, 438 residues long: Ribosomal protein uS12 methylthiotransferase RimO (438 aa).

In terms of domain architecture, MTTase N-terminal spans 5–115; it reads PRVGFVSLGC…VMSAVHTHLP (111 aa). 6 residues coordinate [4Fe-4S] cluster: Cys-14, Cys-50, Cys-79, Cys-146, Cys-150, and Cys-153. The region spanning 132 to 369 is the Radical SAM core domain; that stretch reads LTPKHYAYLK…MAVQAEISAR (238 aa). Positions 372–438 constitute a TRAM domain; it reads ERRVGQTLQV…SEHDLWGERR (67 aa).

It belongs to the methylthiotransferase family. RimO subfamily. The cofactor is [4Fe-4S] cluster.

It is found in the cytoplasm. It catalyses the reaction L-aspartate(89)-[ribosomal protein uS12]-hydrogen + (sulfur carrier)-SH + AH2 + 2 S-adenosyl-L-methionine = 3-methylsulfanyl-L-aspartate(89)-[ribosomal protein uS12]-hydrogen + (sulfur carrier)-H + 5'-deoxyadenosine + L-methionine + A + S-adenosyl-L-homocysteine + 2 H(+). Catalyzes the methylthiolation of an aspartic acid residue of ribosomal protein uS12. The sequence is that of Ribosomal protein uS12 methylthiotransferase RimO from Chromobacterium violaceum (strain ATCC 12472 / DSM 30191 / JCM 1249 / CCUG 213 / NBRC 12614 / NCIMB 9131 / NCTC 9757 / MK).